The primary structure comprises 1517 residues: Dual oxidase 2 (1517 aa).

Residues Met1–Gly25 form the signal peptide. Over Gln26–Gly599 the chain is Extracellular. The segment at Ser30–Ala596 is peroxidase-like; mediates peroxidase activity. 4 N-linked (GlcNAc...) asparagine glycosylation sites follow: Asn100, Asn348, Asn455, and Asn537. Cys124 and Cys1131 form a disulfide bridge. Residues Val600–Ala620 traverse the membrane as a helical segment. The Cytoplasmic segment spans residues Arg621–His1010. 3 consecutive EF-hand domains span residues Pro819–Gly854, Ser855–Ile890, and Gln899–Asp934. Positions 832, 834, 836, 838, 843, 868, 870, 872, and 879 each coordinate Ca(2+). The segment at Arg960–Ser1214 is interaction with TXNDC11. The helical transmembrane segment at Ile1011–Tyr1031 threads the bilayer. Residues Tyr1032 to Tyr1046 lie on the Extracellular side of the membrane. A helical membrane pass occupies residues Val1047–Leu1067. The 183-residue stretch at Arg1053–Ser1235 folds into the Ferric oxidoreductase domain. At Leu1068 to Ala1100 the chain is on the cytoplasmic side. Residues Met1101 to Phe1121 form a helical membrane-spanning segment. Topologically, residues Ser1122–Glu1154 are extracellular. Residues Thr1155–Ala1175 traverse the membrane as a helical segment. Over Ser1176–Arg1185 the chain is Cytoplasmic. A helical membrane pass occupies residues Gly1186–Ser1206. Residue Tyr1207 is a topological domain, extracellular. Residues Ala1208 to Gly1228 form a helical membrane-spanning segment. Residues Asp1229–Phe1517 lie on the Cytoplasmic side of the membrane. Positions Arg1236–Glu1342 constitute an FAD-binding FR-type domain.

The protein in the N-terminal section; belongs to the peroxidase family. In terms of assembly, heterodimer with DUOXA2; disulfide-linked. Interacts with TXNDC11, TPO and CYBA. Post-translationally, N-glycosylated. As to expression, expressed in colon, duodenum, rectum and thyroid.

It is found in the apical cell membrane. It localises to the cell junction. It carries out the reaction NADH + O2 + H(+) = H2O2 + NAD(+). It catalyses the reaction NADPH + O2 + H(+) = H2O2 + NADP(+). The protein operates within hormone biosynthesis; thyroid hormone biosynthesis. The NADPH oxidase activity is calcium-dependent. Peroxidase activity is inhibited by aminobenzohydrazide. In terms of biological role, generates hydrogen peroxide which is required for the activity of thyroid peroxidase/TPO and lactoperoxidase/LPO. Plays a role in thyroid hormones synthesis and lactoperoxidase-mediated antimicrobial defense at the surface of mucosa. May have its own peroxidase activity through its N-terminal peroxidase-like domain. This is Dual oxidase 2 (Duox2) from Rattus norvegicus (Rat).